The following is an 87-amino-acid chain: DLLNKPKEIKEKILIGRVEKRLKELSLMDQTFIKDSNLSIEELIKQNISLLGENIKIRRFERFVLGEGLNKRSDDFANEVAQIINAN.

This sequence belongs to the EF-Ts family.

It localises to the plastid. Its subcellular location is the chloroplast. Associates with the EF-Tu.GDP complex and induces the exchange of GDP to GTP. It remains bound to the aminoacyl-tRNA.EF-Tu.GTP complex up to the GTP hydrolysis stage on the ribosome. This chain is Elongation factor Ts, chloroplastic (tsf), found in Antithamnion sp. (Red alga).